A 411-amino-acid chain; its full sequence is Putative competence-damage inducible protein (411 aa).

It belongs to the CinA family.

The chain is Putative competence-damage inducible protein from Clostridium acetobutylicum (strain ATCC 824 / DSM 792 / JCM 1419 / IAM 19013 / LMG 5710 / NBRC 13948 / NRRL B-527 / VKM B-1787 / 2291 / W).